The primary structure comprises 482 residues: Ubiquitin carboxyl-terminal hydrolase MINDY-1 (482 aa).

The interval 1–119 (MEQPQAECPA…RPQQLPQSPR (119 aa)) is disordered. The segment covering 21-66 (ESEKHEALSGPEKHPQDKDGADAAPEKHPQDKDGADAHGEAGKQKS) has biased composition (basic and acidic residues). Over residues 82-94 (CPPPEASSSPPGP) the composition is skewed to pro residues. Over residues 106–119 (EACSRPQQLPQSPR) the composition is skewed to polar residues. Phosphoserine is present on S117. Catalysis depends on C151, which acts as the Nucleophile. The Proton acceptor role is filled by H333. The interval 402–441 (QVDQDYLIALSLQQQQQPQGMLGLSDLELAQQLQQEEYQQ) is ubiquitin-binding domain (UBD). The span at 437–446 (EEYQQQQAVQ) shows a compositional bias: low complexity. The disordered stretch occupies residues 437–482 (EEYQQQQAVQPVRTRAPSSPGRGATSGRPAGERRQRSKTESDCVLL). At S454 the chain carries Phosphoserine. Basic and acidic residues predominate over residues 466–482 (AGERRQRSKTESDCVLL).

Belongs to the MINDY deubiquitinase family. FAM63 subfamily.

It catalyses the reaction Thiol-dependent hydrolysis of ester, thioester, amide, peptide and isopeptide bonds formed by the C-terminal Gly of ubiquitin (a 76-residue protein attached to proteins as an intracellular targeting signal).. Hydrolase that can specifically remove 'Lys-48'-linked conjugated ubiquitin from proteins. Has exodeubiquitinase activity and has a preference for long polyubiquitin chains. May play a regulatory role at the level of protein turnover. The protein is Ubiquitin carboxyl-terminal hydrolase MINDY-1 (Mindy1) of Rattus norvegicus (Rat).